We begin with the raw amino-acid sequence, 1387 residues long: Magnesium-chelatase subunit ChlH, chloroplastic (1387 aa).

A chloroplast-targeting transit peptide spans Met1–Arg50.

This sequence belongs to the Mg-chelatase subunit H family. In terms of assembly, the magnesium chelatase complex is a heterotrimer consisting of subunits CHLI, CHLD and CHLH.

The protein localises to the plastid. It is found in the chloroplast stroma. The protein resides in the chloroplast membrane. It carries out the reaction protoporphyrin IX + Mg(2+) + ATP + H2O = Mg-protoporphyrin IX + ADP + phosphate + 3 H(+). It functions in the pathway porphyrin-containing compound metabolism; chlorophyll biosynthesis. Its function is as follows. Involved in chlorophyll biosynthesis. Catalyzes the insertion of magnesium ion into protoporphyrin IX to yield Mg-protoporphyrin IX. The reaction takes place in two steps, with an ATP-dependent activation followed by an ATP-dependent chelation step. May be involved in the plastid-to-nucleus retrograde signaling. The polypeptide is Magnesium-chelatase subunit ChlH, chloroplastic (CHLH) (Oryza sativa subsp. indica (Rice)).